Here is a 409-residue protein sequence, read N- to C-terminus: Autophagy-related protein 21 (409 aa).

WD repeat units lie at residues 1–35, 221–261, 273–312, and 361–402; these read MKVL…KCFE, VHKG…TLQS, TRPC…QQNK, and KVDD…GECI. The short motif at 269 to 273 is the L/FRRG motif element; the sequence is FRRGT.

It belongs to the WD repeat PROPPIN family.

The protein resides in the cytoplasm. It is found in the membrane. It localises to the vacuole membrane. Functionally, required for cytoplasm to vacuole transport (Cvt) vesicles formation and mitophagy. Involved in binding of phosphatidylethanolamine to ATG8 and in recruitment of ATG8 and ATG5 to the pre-autophagosomal structure. Protects ATG8 from ARG4-mediated cleavage. In Eremothecium gossypii (strain ATCC 10895 / CBS 109.51 / FGSC 9923 / NRRL Y-1056) (Yeast), this protein is Autophagy-related protein 21 (ATG21).